A 568-amino-acid chain; its full sequence is MAGUK p55 subfamily member 3 (568 aa).

L27 domains follow at residues 6-60 (EDSG…ERQS) and 61-118 (PTPV…FDPV). Residues 137-218 (IVRLVKNKEP…SITLKIIPAT (82 aa)) enclose the PDZ domain. The SH3 domain maps to 226–296 (DSKVFMRALF…PSKQFQERRL (71 aa)). Ser-307 carries the phosphoserine modification. Residues 385 to 568 (PRLVVLIGSL…QEPAASSELS (184 aa)) enclose the Guanylate kinase-like domain.

The protein belongs to the MAGUK family. Interacts with HTR2C; this interaction stabilizes the receptor at the plasma membrane and prevents the desensitization of the HTR2C receptor-mediated calcium response. Interacts with HTR2A. Interacts with HTR4. Interacts (via PDZ domain) with CADM1 (via C-terminus)Interacts (via PDZ domain) with CADM1; this interaction connects CADM1 with DLG1. Interacts (via Guanylate kinase-like domain) with PALS1. Interacts with DLG1 (via N-terminus); this interaction connects CADM1 with DLG1 and links CADM1 with the regulatory subunit of phosphoinositide-3-kinase (PI3K) by forming a multiprotein complex and participates in cell spreading. In terms of tissue distribution, expressed in brain, skeletal muscle, testis, kidney, and lung.

Its subcellular location is the apical cell membrane. The protein resides in the cell membrane. The protein localises to the cell junction. It localises to the adherens junction. In terms of biological role, participates in cell spreading through the phosphoinositide-3-kinase (PI3K) pathway by connecting CADM1 to DLG1 and the regulatory subunit of phosphoinositide-3-kinase (PI3K). Stabilizes HTR2C at the plasma membrane and prevents its desensitization. May participates in the maintenance of adherens junctions. The protein is MAGUK p55 subfamily member 3 of Mus musculus (Mouse).